Here is a 228-residue protein sequence, read N- to C-terminus: MYLVDTIDYQKICCIIKTFEDNILFQKNYHSTWFLKSIANIQKEKYNYGLEVAFVGYSNSGKSSIINALTNQKKLAKISRTPGRTRLINIFSVTSEIRLVDFPGYGYAQVSRSISKKWKEMIFQYLNIQKCLQGLVIITDIRCPIKEIDELVINLAVSLNIPILLLLNKMDKVTRSIQKSKLFSTREKMLNFSNNINVELFSSFKKIGIHKLQFVLNNWFSSDKKLCQ.

The EngB-type G domain maps to 48–222; that stretch reads YGLEVAFVGY…QFVLNNWFSS (175 aa). GTP-binding positions include 56-63, 83-87, 101-104, 168-171, and 201-203; these read GYSNSGKS, GRTRL, DFPG, NKMD, and FSS. Residues serine 63 and threonine 85 each contribute to the Mg(2+) site.

Belongs to the TRAFAC class TrmE-Era-EngA-EngB-Septin-like GTPase superfamily. EngB GTPase family. It depends on Mg(2+) as a cofactor.

Its function is as follows. Necessary for normal cell division and for the maintenance of normal septation. The polypeptide is Probable GTP-binding protein EngB (Buchnera aphidicola subsp. Baizongia pistaciae (strain Bp)).